We begin with the raw amino-acid sequence, 332 residues long: MASGLVRLLQQGHRCLLAPVAPKLVPPVRGVKKGFRAAFRFQKELERQRLLRCPPPPVRRSEKPNWDYHAEIQAFGHRLQENFSLDLLKTAFVNSCYIKSEEAKRQQLGIEKEAVLLNLKSNQELSEQGTSFSQTCLTQFLEDEYPDMPTEGIKNLVDFLTGEEVVCHVARNLAVEQLTLSEEFPVPPAVLQQTFFAVIGALLQSSGPERTALFIRDFLITQMTGKELFEMWKIINPMGLLVEELKKRNVSAPESRLTRQSGGTTALPLYFVGLYCDKKLIAEGPGETVLVAEEEAARVALRKLYGFTENRRPWNYSKPKETLRAEKSITAS.

A mitochondrion-targeting transit peptide spans 1-30 (MASGLVRLLQQGHRCLLAPVAPKLVPPVRG). Residues 86–228 (DLLKTAFVNS…LITQMTGKEL (143 aa)) form the RNase III domain. The region spanning 236–306 (NPMGLLVEEL…ARVALRKLYG (71 aa)) is the DRBM domain.

The protein belongs to the ribonuclease III family. Mitochondrion-specific ribosomal protein mL44 subfamily. Component of the mitochondrial large ribosomal subunit (mt-LSU). Mature mammalian 55S mitochondrial ribosomes consist of a small (28S) and a large (39S) subunit. The 28S small subunit contains a 12S ribosomal RNA (12S mt-rRNA) and 30 different proteins. The 39S large subunit contains a 16S rRNA (16S mt-rRNA), a copy of mitochondrial valine transfer RNA (mt-tRNA(Val)), which plays an integral structural role, and 52 different proteins.

The protein resides in the mitochondrion. Functionally, component of the 39S subunit of mitochondrial ribosome. May have a function in the assembly/stability of nascent mitochondrial polypeptides exiting the ribosome. The protein is Large ribosomal subunit protein mL44 (MRPL44) of Homo sapiens (Human).